The primary structure comprises 151 residues: Transcriptional repressor NrdR (151 aa).

Residues 3–34 fold into a zinc finger; sequence CPYCAYGESKVVDSRSTEDGSSIRRRRECLKC. The ATP-cone domain occupies 49 to 139; it reads ILVIKKNMSR…VYRQFKDINT (91 aa).

It belongs to the NrdR family. The cofactor is Zn(2+).

In terms of biological role, negatively regulates transcription of bacterial ribonucleotide reductase nrd genes and operons by binding to NrdR-boxes. The polypeptide is Transcriptional repressor NrdR (Clostridium botulinum (strain ATCC 19397 / Type A)).